We begin with the raw amino-acid sequence, 416 residues long: Tyrosine--tRNA ligase (416 aa).

Residue tyrosine 34 participates in L-tyrosine binding. The 'HIGH' region signature appears at 39-48 (PTGDSLHIGH). L-tyrosine is bound by residues tyrosine 165 and glutamine 169. The short motif at 227-231 (KFGKT) is the 'KMSKS' region element. Lysine 230 is a binding site for ATP. The S4 RNA-binding domain maps to 349–416 (KNIVEWLVDT…KKKYFLARVK (68 aa)).

This sequence belongs to the class-I aminoacyl-tRNA synthetase family. TyrS type 1 subfamily. As to quaternary structure, homodimer.

It localises to the cytoplasm. It catalyses the reaction tRNA(Tyr) + L-tyrosine + ATP = L-tyrosyl-tRNA(Tyr) + AMP + diphosphate + H(+). Functionally, catalyzes the attachment of tyrosine to tRNA(Tyr) in a two-step reaction: tyrosine is first activated by ATP to form Tyr-AMP and then transferred to the acceptor end of tRNA(Tyr). The polypeptide is Tyrosine--tRNA ligase (Ligilactobacillus salivarius (strain UCC118) (Lactobacillus salivarius)).